Reading from the N-terminus, the 210-residue chain is Uridine kinase (210 aa).

12–19 (GGSGGGKT) is a binding site for ATP.

It belongs to the uridine kinase family.

The protein resides in the cytoplasm. It catalyses the reaction uridine + ATP = UMP + ADP + H(+). The catalysed reaction is cytidine + ATP = CMP + ADP + H(+). It functions in the pathway pyrimidine metabolism; CTP biosynthesis via salvage pathway; CTP from cytidine: step 1/3. The protein operates within pyrimidine metabolism; UMP biosynthesis via salvage pathway; UMP from uridine: step 1/1. In Streptococcus uberis (strain ATCC BAA-854 / 0140J), this protein is Uridine kinase.